The chain runs to 549 residues: Glucose-6-phosphate isomerase (549 aa).

N6-acetyllysine occurs at positions 80, 228, and 234. The active-site Proton donor is glutamate 355. Residues histidine 386 and lysine 514 contribute to the active site.

This sequence belongs to the GPI family.

The protein resides in the cytoplasm. The enzyme catalyses alpha-D-glucose 6-phosphate = beta-D-fructose 6-phosphate. It functions in the pathway carbohydrate biosynthesis; gluconeogenesis. The protein operates within carbohydrate degradation; glycolysis; D-glyceraldehyde 3-phosphate and glycerone phosphate from D-glucose: step 2/4. Catalyzes the reversible isomerization of glucose-6-phosphate to fructose-6-phosphate. The chain is Glucose-6-phosphate isomerase from Escherichia coli (strain SE11).